The chain runs to 1167 residues: DNA-directed RNA polymerase subunit beta (1167 aa).

The interval 1 to 27 is disordered; the sequence is MAVSPANQATAATTSAESRSEATGIPG. The segment covering 9–23 has biased composition (low complexity); that stretch reads ATAATTSAESRSEAT.

Belongs to the RNA polymerase beta chain family. In terms of assembly, the RNAP catalytic core consists of 2 alpha, 1 beta, 1 beta' and 1 omega subunit. When a sigma factor is associated with the core the holoenzyme is formed, which can initiate transcription.

The enzyme catalyses RNA(n) + a ribonucleoside 5'-triphosphate = RNA(n+1) + diphosphate. Its function is as follows. DNA-dependent RNA polymerase catalyzes the transcription of DNA into RNA using the four ribonucleoside triphosphates as substrates. This Amycolatopsis mediterranei (strain S699) (Nocardia mediterranei) protein is DNA-directed RNA polymerase subunit beta.